Consider the following 480-residue polypeptide: 2-phosphoxylose phosphatase 1 (480 aa).

Residues 1–6 are Cytoplasmic-facing; that stretch reads MLFRNR. A helical; Signal-anchor for type II membrane protein membrane pass occupies residues 7-27; that stretch reads FLLLLALAALLAFVSLSLQFF. At 28–480 the chain is on the lumenal side; the sequence is HLIPVSTPKN…YYDACHREGF (453 aa). His-97 serves as the catalytic Nucleophile. 2 N-linked (GlcNAc...) asparagine glycosylation sites follow: Asn-305 and Asn-354. Asp-379 functions as the Proton donor in the catalytic mechanism.

Belongs to the histidine acid phosphatase family. As to quaternary structure, interacts with B3GAT3; the interaction increases the 2-phosphoxylose phosphatase activity of PXYLP1 during completion of linkage region formation in a B3GAT3-mediated manner. Widely expressed. Strongly expressed in spleen, fetal liver, moderately in placenta, pancreas, kidney, thymus and colon.

Its subcellular location is the golgi apparatus membrane. It carries out the reaction 3-O-[beta-D-GlcA-(1-&gt;3)-beta-D-Gal-(1-&gt;3)-beta-D-Gal-(1-&gt;4)-beta-D-2-O-P-Xyl]-L-seryl-[protein] + H2O = 3-O-(beta-D-GlcA-(1-&gt;3)-beta-D-Gal-(1-&gt;3)-beta-D-Gal-(1-&gt;4)-beta-D-Xyl)-L-seryl-[protein] + phosphate. In terms of biological role, responsible for the 2-O-dephosphorylation of xylose in the glycosaminoglycan-protein linkage region of proteoglycans thereby regulating the amount of mature glycosaminoglycan (GAG) chains. Sulfated glycosaminoglycans (GAGs), including heparan sulfate and chondroitin sulfate, are synthesized on the so-called common GAG-protein linkage region (GlcUAbeta1-3Galbeta1-3Galbeta1-4Xylbeta1-O-Ser) of core proteins, which is formed by the stepwise addition of monosaccharide residues by the respective specific glycosyltransferases. Xylose 2-O-dephosphorylation during completion of linkage region formation is a prerequisite for the initiation and efficient elongation of the repeating disaccharide region of GAG chains. The chain is 2-phosphoxylose phosphatase 1 from Homo sapiens (Human).